A 122-amino-acid polypeptide reads, in one-letter code: Double-headed protease inhibitor, submandibular gland (122 aa).

Kazal-like domains lie at 10-70 (GGRK…ECDI) and 71-121 (ECTQ…QCQS). 6 disulfides stabilise this stretch: Cys16–Cys50, Cys28–Cys47, Cys36–Cys68, Cys72–Cys101, Cys79–Cys98, and Cys87–Cys119.

Its subcellular location is the secreted. Functionally, this inhibitor is composed of two homologous actively inhibiting halves: one which inhibits trypsin, the other which inhibits elastase. The protein is Double-headed protease inhibitor, submandibular gland of Martes martes (European pine marten).